The chain runs to 443 residues: Probable glycine dehydrogenase (decarboxylating) subunit 1 (443 aa).

The protein belongs to the GcvP family. N-terminal subunit subfamily. In terms of assembly, the glycine cleavage system is composed of four proteins: P, T, L and H. In this organism, the P 'protein' is a heterodimer of two subunits.

The enzyme catalyses N(6)-[(R)-lipoyl]-L-lysyl-[glycine-cleavage complex H protein] + glycine + H(+) = N(6)-[(R)-S(8)-aminomethyldihydrolipoyl]-L-lysyl-[glycine-cleavage complex H protein] + CO2. The glycine cleavage system catalyzes the degradation of glycine. The P protein binds the alpha-amino group of glycine through its pyridoxal phosphate cofactor; CO(2) is released and the remaining methylamine moiety is then transferred to the lipoamide cofactor of the H protein. This is Probable glycine dehydrogenase (decarboxylating) subunit 1 from Endomicrobium trichonymphae.